Reading from the N-terminus, the 576-residue chain is MTKYERDPELVNFLSKVEDLNSKRYSNIPSSKPAGEALSPVRSHNSGEYRRADMMTGKNVEGCDNLAYRSAYNYEMTFSPKKTHYSLSELNLERITPRPDLEGSASQKEKKFLISEEDYLLLQKLKASQTYNDSNADKNLPSFEKGPRMPSRGRPRPREKEIITIQYDFELPGRADIPSSSSSSSPPPLPTRRDHIKITDGNEEKPLLPTRPNKAEVTESPSSRSIKPDAVVPERVKPAPPVSRSTKPASFLSSLEDNKLTKAKSYNSEMETPKTTVKSSHIDYLDSIQLKPTTLSPTMKNKPKPTPPSPPAKRIPRSESFIKSMLNSNLTTTSKPSLPEKPQKLRNANLAAHKTKPSIPPKKVELNIVLPELRPVETSPTKQNFENSIDLPKLRSSNRNIKKEEEDSIPEAIKGIQNLKKTKQQKPAIPQKKSFLTNNSKNTTLKNGDDINKLNDEIEALSLRNNLKKRPPTAPQRKISLPEALRKVELMKKSKTEPVLESSNELSINAKLDAIIASRNLRASNTLPELSGVNTNIATSDKYTTSRDETVKETKPLVHPNKNRTRGPRRKLPTRV.

Residues 24-50 (RYSNIPSSKPAGEALSPVRSHNSGEYR) are disordered. Ser-46, Ser-79, and Ser-88 each carry phosphoserine. 2 disordered regions span residues 132–160 (NDSN…PREK) and 173–316 (GRAD…KRIP). Phosphoserine is present on Ser-185. Positions 191-206 (TRRDHIKITDGNEEKP) are enriched in basic and acidic residues. Position 220 is a phosphoserine (Ser-220). Polar residues-rich tracts occupy residues 243–255 (SRST…LSSL) and 264–279 (KSYN…TVKS). The segment covering 304–313 (KPTPPSPPAK) has biased composition (pro residues). A phosphoserine mark is found at Ser-309 and Ser-320. The segment at 408–470 (SIPEAIKGIQ…LSLRNNLKKR (63 aa)) is interaction with F-actin. Positions 541–576 (DKYTTSRDETVKETKPLVHPNKNRTRGPRRKLPTRV) are disordered. Residues 544–556 (TTSRDETVKETKP) are compositionally biased toward basic and acidic residues. Residues 547-576 (RDETVKETKPLVHPNKNRTRGPRRKLPTRV) are interaction with the F-actin capping complex. Basic residues predominate over residues 561–576 (NKNRTRGPRRKLPTRV).

In terms of assembly, interacts (via C-terminus) with the CAP1-CAP2 F-actin capping protein complex. Interacts with INP52 (via SAC domain); the interaction is direct. Interacts with INP53 (via SAC domain); the interaction is direct. Interacts with RVS167. Interacts with SLA1. In terms of processing, phosphorylated by CDC28.

The protein resides in the cytoplasm. The protein localises to the cytoskeleton. Its subcellular location is the actin patch. It localises to the cell membrane. In terms of biological role, recruits the capping protein complex to actin patches and the actomyosin contractile ring, and/or stabilizes their interaction. May serve as an adapter to link INP52 and INP53 to the cortical actin cytoskeleton. Binds F-actin. This chain is F-actin capping regulator BSP1 (BSP1), found in Saccharomyces cerevisiae (strain ATCC 204508 / S288c) (Baker's yeast).